Here is a 453-residue protein sequence, read N- to C-terminus: Trigger factor (453 aa).

Positions 171–256 (GDRVTISFKG…ATVLEAPQES (86 aa)) constitute a PPIase FKBP-type domain.

This sequence belongs to the FKBP-type PPIase family. Tig subfamily.

It is found in the cytoplasm. The catalysed reaction is [protein]-peptidylproline (omega=180) = [protein]-peptidylproline (omega=0). Functionally, involved in protein export. Acts as a chaperone by maintaining the newly synthesized protein in an open conformation. Functions as a peptidyl-prolyl cis-trans isomerase. This chain is Trigger factor, found in Rhodopseudomonas palustris (strain BisB18).